Reading from the N-terminus, the 306-residue chain is Aspartate carbamoyltransferase catalytic subunit (306 aa).

Carbamoyl phosphate is bound by residues R55 and T56. Position 84 (K84) interacts with L-aspartate. Residues R105, H133, and Q136 each contribute to the carbamoyl phosphate site. Residues R166 and R227 each coordinate L-aspartate. Residues L265 and P266 each coordinate carbamoyl phosphate.

This sequence belongs to the aspartate/ornithine carbamoyltransferase superfamily. ATCase family. As to quaternary structure, heterododecamer (2C3:3R2) of six catalytic PyrB chains organized as two trimers (C3), and six regulatory PyrI chains organized as three dimers (R2).

The enzyme catalyses carbamoyl phosphate + L-aspartate = N-carbamoyl-L-aspartate + phosphate + H(+). It participates in pyrimidine metabolism; UMP biosynthesis via de novo pathway; (S)-dihydroorotate from bicarbonate: step 2/3. Functionally, catalyzes the condensation of carbamoyl phosphate and aspartate to form carbamoyl aspartate and inorganic phosphate, the committed step in the de novo pyrimidine nucleotide biosynthesis pathway. The protein is Aspartate carbamoyltransferase catalytic subunit of Aeromonas salmonicida (strain A449).